The chain runs to 96 residues: Bacterial microcompartment shell protein EutM (96 aa).

One can recognise a BMC domain in the interval 3–87 (ALGMIETRGL…PHGDLEEVFP (85 aa)).

The protein belongs to the bacterial microcompartments protein family. In terms of assembly, homohexamer with a central pore of up to 8.6 Angstroms diameter. The hexamers pack into a two-dimensional array. Interacts with EutQ; a probably cytoplasm-facing helix (Val-49 to Gln-64) interacts with N-terminus of EutQ.

It is found in the bacterial microcompartment. It functions in the pathway amine and polyamine degradation; ethanolamine degradation. In terms of biological role, probably a major component of the bacterial microcompartment (BMC) shell dedicated to ethanolamine degradation. Each homohexamer has a central pore with an opening of up to 8.6 Angstroms. A positively-charged funnel leads to the pore from each side of the hexamer. The pore probably allows metabolite passage into and out of the BMC. Expression of eutK, eutL, eutM, eutN, eutS (eutSMNLK) in E.coli leads to formation of a single BMC. Expression alone leads to thick filaments that interfere with cell separation. Coexpression of eutQ with eutSMNLK permits E.coli to make cells with more than one mobile BMC, as is usual in vivo. May play a role in BMC shell biogenesis. Can replace homolog pduA in the pdu operon, cells grow better than wild-type on 1,2-propanediol and vitamin B12. Protein is incorporated into the pdu BMC microcompartment. Functionally, the ethanolamine (EA) catabolic bacterial microcompartment (BMC) probably concentrates low levels of ethanolamine catabolic enzymes, concentrates volatile reaction intermediates, keeps the level of toxic acetaldehyde low, generates enough acetyl-CoA to support cell growth, and maintains a pool of free coenzyme A (CoA) and NAD. Deletion of BMC genes (eutK, eutL, eutM) restores growth of eutD deletions, suggesting there are dedicated pools of coenzyme A (CoA) and NAD in the BMC. Its function is as follows. Expression of the eut operon allows this bacteria to use ethanolamine as a carbon, nitrogen and energy source. It relies on cobalamin (vitamin B12) both as a cofactor for the ethanolamine ammonia-lyase (EAL) activity and to induce the operon. EA enhances bacterial survival in macrophages in a concentration-dependent manner, suggesting it is an important nutrient during infection. This is Bacterial microcompartment shell protein EutM from Salmonella typhimurium (strain LT2 / SGSC1412 / ATCC 700720).